Consider the following 319-residue polypeptide: Probable cytochrome c oxidase subunit 2 (319 aa).

An N-terminal signal peptide occupies residues 1 to 33; sequence MSPNGSDRSPRRPMRRKLLQALTAGLVLATATG. The next 2 membrane-spanning stretches (helical) occupy residues 63–83 and 101–121; these read WAAA…ATIF and MPIE…LFYF. Residues histidine 227, cysteine 262, cysteine 266, and histidine 270 each coordinate Cu cation.

The protein belongs to the cytochrome c oxidase subunit 2 family. The cofactor is Cu cation. Heme serves as cofactor.

It localises to the cell membrane. It carries out the reaction 4 Fe(II)-[cytochrome c] + O2 + 8 H(+)(in) = 4 Fe(III)-[cytochrome c] + 2 H2O + 4 H(+)(out). Its function is as follows. Subunits I and II form the functional core of the enzyme complex. Electrons originating in cytochrome c are transferred via heme a and Cu(A) to the binuclear center formed by heme a3 and Cu(B). This chain is Probable cytochrome c oxidase subunit 2 (ctaC), found in Streptomyces avermitilis (strain ATCC 31267 / DSM 46492 / JCM 5070 / NBRC 14893 / NCIMB 12804 / NRRL 8165 / MA-4680).